A 357-amino-acid polypeptide reads, in one-letter code: Ribosomal RNA large subunit methyltransferase M (357 aa).

S-adenosyl-L-methionine-binding positions include Ser-183, 216–219, Asp-235, Asp-255, and Asp-271; that span reads APGG. The active-site Proton acceptor is the Lys-300.

This sequence belongs to the class I-like SAM-binding methyltransferase superfamily. RNA methyltransferase RlmE family. RlmM subfamily. In terms of assembly, monomer.

It is found in the cytoplasm. It catalyses the reaction cytidine(2498) in 23S rRNA + S-adenosyl-L-methionine = 2'-O-methylcytidine(2498) in 23S rRNA + S-adenosyl-L-homocysteine + H(+). Functionally, catalyzes the 2'-O-methylation at nucleotide C2498 in 23S rRNA. This Pseudomonas syringae pv. tomato (strain ATCC BAA-871 / DC3000) protein is Ribosomal RNA large subunit methyltransferase M.